A 304-amino-acid polypeptide reads, in one-letter code: MATRNEEILRKPDWLKIKLNTNDNYTGLKKMMREKNLHTVCEEAKCPNIHECWGARRTATFMILGAVCTRACRFCAVKTGLPNELDLNEPERVAESVELMNLKHVVITAVARDDLRDQGSNVYAETVRKVRERNPFTTIEILPSDMGGDYEALETLMASRPDILNHNIETVRRLTPRVRARATYDRTLQFLRRSKELQPDIPTKSSLMVGLGETMEEIYETMDDLRANDVDILTIGQYLQPSRKHLKVEKYYTPLEFGKMRKIAMEKGFKHCQAGPLVRSSYHADEQVNEAAKEKQRQGEEQLN.

The [4Fe-4S] cluster site is built by Cys41, Cys46, Cys52, Cys68, Cys72, Cys75, and Ser281. One can recognise a Radical SAM core domain in the interval 54 to 270 (GARRTATFMI…RKIAMEKGFK (217 aa)). Residues 282–304 (YHADEQVNEAAKEKQRQGEEQLN) form a disordered region.

This sequence belongs to the radical SAM superfamily. Lipoyl synthase family. The cofactor is [4Fe-4S] cluster.

The protein localises to the cytoplasm. It carries out the reaction [[Fe-S] cluster scaffold protein carrying a second [4Fe-4S](2+) cluster] + N(6)-octanoyl-L-lysyl-[protein] + 2 oxidized [2Fe-2S]-[ferredoxin] + 2 S-adenosyl-L-methionine + 4 H(+) = [[Fe-S] cluster scaffold protein] + N(6)-[(R)-dihydrolipoyl]-L-lysyl-[protein] + 4 Fe(3+) + 2 hydrogen sulfide + 2 5'-deoxyadenosine + 2 L-methionine + 2 reduced [2Fe-2S]-[ferredoxin]. It functions in the pathway protein modification; protein lipoylation via endogenous pathway; protein N(6)-(lipoyl)lysine from octanoyl-[acyl-carrier-protein]. Functionally, catalyzes the radical-mediated insertion of two sulfur atoms into the C-6 and C-8 positions of the octanoyl moiety bound to the lipoyl domains of lipoate-dependent enzymes, thereby converting the octanoylated domains into lipoylated derivatives. In Staphylococcus epidermidis (strain ATCC 35984 / DSM 28319 / BCRC 17069 / CCUG 31568 / BM 3577 / RP62A), this protein is Lipoyl synthase.